The chain runs to 116 residues: Large ribosomal subunit protein bL20 (116 aa).

This sequence belongs to the bacterial ribosomal protein bL20 family.

Functionally, binds directly to 23S ribosomal RNA and is necessary for the in vitro assembly process of the 50S ribosomal subunit. It is not involved in the protein synthesizing functions of that subunit. The sequence is that of Large ribosomal subunit protein bL20 from Mycoplasmopsis agalactiae (strain NCTC 10123 / CIP 59.7 / PG2) (Mycoplasma agalactiae).